The chain runs to 896 residues: Alanine--tRNA ligase (896 aa).

Residues 439 to 456 are compositionally biased toward basic and acidic residues; that stretch reads QRAKDDAKAKKGQHRDAS. The segment at 439–459 is disordered; sequence QRAKDDAKAKKGQHRDASAYR. Zn(2+) contacts are provided by H579, H583, C681, and H685.

This sequence belongs to the class-II aminoacyl-tRNA synthetase family. It depends on Zn(2+) as a cofactor.

The protein resides in the cytoplasm. It catalyses the reaction tRNA(Ala) + L-alanine + ATP = L-alanyl-tRNA(Ala) + AMP + diphosphate. Catalyzes the attachment of alanine to tRNA(Ala) in a two-step reaction: alanine is first activated by ATP to form Ala-AMP and then transferred to the acceptor end of tRNA(Ala). Also edits incorrectly charged Ser-tRNA(Ala) and Gly-tRNA(Ala) via its editing domain. This chain is Alanine--tRNA ligase, found in Nocardioides sp. (strain ATCC BAA-499 / JS614).